Here is a 544-residue protein sequence, read N- to C-terminus: Phenylalanine--tRNA ligase beta subunit (544 aa).

The B5 domain occupies 270–346 (LEPKTRFLTK…KGYGYENIKV (77 aa)). Positions 324, 330, 333, and 334 each coordinate Mg(2+).

It belongs to the phenylalanyl-tRNA synthetase beta subunit family. Type 2 subfamily. In terms of assembly, tetramer of two alpha and two beta subunits. Mg(2+) is required as a cofactor.

Its subcellular location is the cytoplasm. It catalyses the reaction tRNA(Phe) + L-phenylalanine + ATP = L-phenylalanyl-tRNA(Phe) + AMP + diphosphate + H(+). The sequence is that of Phenylalanine--tRNA ligase beta subunit from Methanosarcina barkeri (strain Fusaro / DSM 804).